The chain runs to 142 residues: Large ribosomal subunit protein cL37 alpha (142 aa).

A chloroplast-targeting transit peptide spans 1-62; that stretch reads MALLSPLLSL…AQKRGTVVAM (62 aa). The disordered stretch occupies residues 123–142; it reads RKLRKRGAWPPSKMKKLKNV.

It belongs to the chloroplast-specific ribosomal protein cL37 family. As to quaternary structure, component of the chloroplast large ribosomal subunit (LSU). Mature 70S chloroplast ribosomes of higher plants consist of a small (30S) and a large (50S) subunit. The 30S small subunit contains 1 molecule of ribosomal RNA (16S rRNA) and 24 different proteins. The 50S large subunit contains 3 rRNA molecules (23S, 5S and 4.5S rRNA) and 33 different proteins.

It is found in the plastid. The protein localises to the chloroplast. In terms of biological role, component of the chloroplast ribosome (chloro-ribosome), a dedicated translation machinery responsible for the synthesis of chloroplast genome-encoded proteins, including proteins of the transcription and translation machinery and components of the photosynthetic apparatus. The polypeptide is Large ribosomal subunit protein cL37 alpha (PSRP5) (Spinacia oleracea (Spinach)).